The following is a 308-amino-acid chain: Mitochondrial import receptor subunit TOM40B (308 aa).

The tract at residues 1–29 is disordered; sequence MGNTLGLAPMGTLPRRSPRREEPLPNPGS. The required for mitochondrial targeting stretch occupies residues 281–308; sequence PLPVTLALGAFLNHWRNRFHCGFSITVG.

It belongs to the Tom40 family. In terms of assembly, forms part of the preprotein translocase of the outer mitochondrial membrane (TOM complex) containing TOMM22, TOMM40, TOMM40L and TOMM70. Interacts with mitochondrial targeting sequences.

Its subcellular location is the mitochondrion outer membrane. Potential channel-forming protein implicated in import of protein precursors into mitochondria. This is Mitochondrial import receptor subunit TOM40B (TOMM40L) from Homo sapiens (Human).